The chain runs to 457 residues: 6-phosphofructo-2-kinase/fructose-2,6-bisphosphatase (457 aa).

The interval 1-20 (MEIPPGLETTKRKVAHSDEH) is disordered. The segment at 1–244 (MEIPPGLETT…VYFLMNIHLL (244 aa)) is 6-phosphofructo-2-kinase. Positions 9 to 20 (TTKRKVAHSDEH) are enriched in basic and acidic residues. 36-44 (GLPARGKTY) is an ATP binding site. Beta-D-fructose 6-phosphate is bound by residues Arg-69 and Arg-98. Asp-124 is a catalytic residue. The beta-D-fructose 6-phosphate site is built by Thr-126 and Arg-132. The active site involves Cys-154. 163 to 168 (NVTDVK) serves as a coordination point for ATP. 3 residues coordinate beta-D-fructose 6-phosphate: Lys-168, Arg-190, and Tyr-194. The tract at residues 245-457 (PRSIYLTRHG…QLPLCDSPRD (213 aa)) is fructose-2,6-bisphosphatase. Residue Arg-252 participates in beta-D-fructose 2,6-bisphosphate binding. His-253 functions as the Tele-phosphohistidine intermediate in the catalytic mechanism. Residues Asn-259 and Gly-265 each contribute to the beta-D-fructose 2,6-bisphosphate site. Catalysis depends on Glu-324, which acts as the Proton donor/acceptor. 6 residues coordinate beta-D-fructose 2,6-bisphosphate: Tyr-335, Arg-349, Lys-353, Tyr-364, Gln-390, and Arg-394. 346-349 (ADDR) is an ATP binding site. Residues 390 to 394 (QAVLR) and Tyr-426 contribute to the ATP site.

The protein in the C-terminal section; belongs to the phosphoglycerate mutase family.

The enzyme catalyses beta-D-fructose 2,6-bisphosphate + H2O = beta-D-fructose 6-phosphate + phosphate. It carries out the reaction beta-D-fructose 6-phosphate + ATP = beta-D-fructose 2,6-bisphosphate + ADP + H(+). Its function is as follows. Synthesis and degradation of fructose 2,6-bisphosphate. This is 6-phosphofructo-2-kinase/fructose-2,6-bisphosphatase from Caenorhabditis elegans.